Reading from the N-terminus, the 593-residue chain is NADH-quinone oxidoreductase subunit C/D (593 aa).

Residues 1–184 (MTADSVLSIP…DPYSLSAAKQ (184 aa)) are NADH dehydrogenase I subunit C. The tract at residues 208–593 (DFMFLNLGPN…IDFVMADVDR (386 aa)) is NADH dehydrogenase I subunit D.

It in the N-terminal section; belongs to the complex I 30 kDa subunit family. This sequence in the C-terminal section; belongs to the complex I 49 kDa subunit family. As to quaternary structure, NDH-1 is composed of 13 different subunits. Subunits NuoB, CD, E, F, and G constitute the peripheral sector of the complex.

It localises to the cell inner membrane. It carries out the reaction a quinone + NADH + 5 H(+)(in) = a quinol + NAD(+) + 4 H(+)(out). In terms of biological role, NDH-1 shuttles electrons from NADH, via FMN and iron-sulfur (Fe-S) centers, to quinones in the respiratory chain. The immediate electron acceptor for the enzyme in this species is believed to be ubiquinone. Couples the redox reaction to proton translocation (for every two electrons transferred, four hydrogen ions are translocated across the cytoplasmic membrane), and thus conserves the redox energy in a proton gradient. The protein is NADH-quinone oxidoreductase subunit C/D of Azotobacter vinelandii (strain DJ / ATCC BAA-1303).